A 181-amino-acid chain; its full sequence is Protein Syd (181 aa).

This sequence belongs to the Syd family.

The protein localises to the cell inner membrane. In terms of biological role, interacts with the SecY protein in vivo. May bind preferentially to an uncomplexed state of SecY, thus functioning either as a chelating agent for excess SecY in the cell or as a regulatory factor that negatively controls the translocase function. The sequence is that of Protein Syd from Escherichia coli O81 (strain ED1a).